The primary structure comprises 152 residues: Superoxide dismutase [Cu-Zn] 1 (152 aa).

Cu cation is bound by residues histidine 45, histidine 47, and histidine 62. Cysteine 56 and cysteine 145 are oxidised to a cystine. Residues histidine 62, histidine 70, histidine 79, and aspartate 82 each contribute to the Zn(2+) site. Residue histidine 119 coordinates Cu cation.

Belongs to the Cu-Zn superoxide dismutase family. Homodimer. Interacts with DJ1A and CCS. The cofactor is Cu cation. Requires Zn(2+) as cofactor. As to expression, expressed in leaves (at protein level). The spatial localization is regulated by miR398-mediated silencing. Mostly present in flowers, old rosette leaves and inflorescence, and, to a lower extent, in cauline leaves, stems and roots.

The protein resides in the cytoplasm. It is found in the cytosol. It localises to the nucleus. The enzyme catalyses 2 superoxide + 2 H(+) = H2O2 + O2. In terms of biological role, destroys radicals which are normally produced within the cells and which are toxic to biological systems. This chain is Superoxide dismutase [Cu-Zn] 1 (CSD1), found in Arabidopsis thaliana (Mouse-ear cress).